Here is a 214-residue protein sequence, read N- to C-terminus: MKLLILTCLVAVALARPKHPIKHQGLSSEVLNENLLRFVVAPFPEVFRKENINELSKDIGSESIEDQAMEDAKQMKAGSSSSSEEIVPNSAEQKYIQKEDVPSERYLGYLEQLLRLKKYNVPQLEIVPKSAEEQLHSMKEGNPAHQKQPMIAVNQELAYFYPQLFRQFYQLDAYPSGAWYYLPLGTQYTDAPSFSDIPNPIGSENSGKITMPLW.

Residues 1–15 form the signal peptide; the sequence is MKLLILTCLVAVALA. The residue at position 27 (Ser27) is a Phosphoserine; in allele A. At Ser56 the chain carries Phosphoserine; in allele C. Phosphoserine is present on residues Ser61 and Ser63. The interval 69-91 is disordered; it reads MEDAKQMKAGSSSSSEEIVPNSA. Phosphoserine; in alleles A and C is present on Ser79. At Ser80 the chain carries Phosphoserine. Ser81 carries the post-translational modification Phosphoserine; in alleles A and C. Phosphoserine is present on Ser82. Ser83 carries the phosphoserine; in alleles A and C modification. At Ser90 the chain carries Phosphoserine. Residues 105-111 are opioid-like peptide sequence; the sequence is RYLGYLE. Ser130 bears the Phosphoserine mark.

The protein belongs to the alpha-casein family. Mammary gland specific. Secreted in milk.

It is found in the secreted. Important role in the capacity of milk to transport calcium phosphate. The sequence is that of Alpha-S1-casein (CSN1S1) from Ovis aries (Sheep).